We begin with the raw amino-acid sequence, 64 residues long: Chromatin protein Cren7 (64 aa).

Belongs to the Cren7 family. As to quaternary structure, monomer. Post-translationally, methylated at multiple sites, to varying extents.

The protein localises to the chromosome. Its subcellular location is the cytoplasm. A chromatin protein, binds double-stranded DNA without sequence specificity. Constrains negative DNA supercoils. The chain is Chromatin protein Cren7 from Aeropyrum pernix (strain ATCC 700893 / DSM 11879 / JCM 9820 / NBRC 100138 / K1).